Here is a 163-residue protein sequence, read N- to C-terminus: Nucleotide-binding protein BC_1159 (163 aa).

The protein belongs to the YajQ family.

In terms of biological role, nucleotide-binding protein. In Bacillus cereus (strain ATCC 14579 / DSM 31 / CCUG 7414 / JCM 2152 / NBRC 15305 / NCIMB 9373 / NCTC 2599 / NRRL B-3711), this protein is Nucleotide-binding protein BC_1159.